Here is a 1173-residue protein sequence, read N- to C-terminus: WASH complex subunit 4 (1173 aa).

A2 is modified (N-acetylalanine). S7 carries the post-translational modification Phosphoserine. Residues 27–56 (QLKNYGRFLEEYTSQLRRIEDALDDLIGDV) are a coiled coil. The tract at residues 705–1173 (KDLALFFSLN…STVSADPVVK (469 aa)) is sufficient for interaction with WASHC5. Positions 1141 to 1155 (AEENQEKKEKEEETK) are enriched in basic and acidic residues. Residues 1141–1173 (AEENQEKKEKEEETKTSNGDGPESTVSADPVVK) form a disordered region. A Phosphothreonine modification is found at T1154.

Belongs to the SWIP family. In terms of assembly, component of the WASH core complex also described as WASH regulatory complex (SHRC) composed of WASH (WASHC1, WASH2P or WASH3P), WASHC2 (WASHC2A or WASHC2C), WASHC3, WASHC4 and WASHC5. The WASH core complex associates via WASHC2 with the F-actin-capping protein dimer (formed by CAPZA1, CAPZA2 or CAPZA3 and CAPZB) in a transient or substoichiometric manner which was initially described as WASH complex.

The protein resides in the early endosome. Its function is as follows. Acts as a component of the WASH core complex that functions as a nucleation-promoting factor (NPF) at the surface of endosomes, where it recruits and activates the Arp2/3 complex to induce actin polymerization, playing a key role in the fission of tubules that serve as transport intermediates during endosome sorting. This Mus musculus (Mouse) protein is WASH complex subunit 4.